Consider the following 435-residue polypeptide: Trigger factor (435 aa).

Residues 163–248 (GDFVTFDFKG…VKEIKVKELP (86 aa)) form the PPIase FKBP-type domain.

It belongs to the FKBP-type PPIase family. Tig subfamily.

Its subcellular location is the cytoplasm. It carries out the reaction [protein]-peptidylproline (omega=180) = [protein]-peptidylproline (omega=0). In terms of biological role, involved in protein export. Acts as a chaperone by maintaining the newly synthesized protein in an open conformation. Functions as a peptidyl-prolyl cis-trans isomerase. In Geobacter sp. (strain M21), this protein is Trigger factor.